A 615-amino-acid polypeptide reads, in one-letter code: MPIQVLPPQLANQIAAGEVVERPASVVKELVENSLDAGATRIDIDIERGGAKLIRIRDNGCGIKKDELALALARHATSKIASLDDLEAIISLGFRGEALASISSVSRLTLTSRTAEQQEAWQAYAEGRDMDVTVKPAAHPVGTTLEVLDLFYNTPARRKFLRTEKTEFNHIDEIIRRIALARFDVTINLSHNGKIVRQYRAVPEGGQKERRLGAICGTAFLEQALAIEWQHGDLTLRGWVADPNHTTPALAEIQYCYVNGRMMRDRLINHAIRQACEDKLGADQQPAFVLYLEIDPHQVDVNVHPAKHEVRFHQSRLVHDFIYQGVLSVLQQQLETPLPLDDEPQPAPRAIPENRVAAGRNHFAEPAVREPVAPRYSPAPASGSRPAAPWPNAQPGYQKQQGEVYRQLLQTPAPMQKPKAPEPQEPALAANSQSFGRVLTIVHSDCALLERDGNISLLSLPVAERWLRQAQLTPGEVPVCAQPLLIPLRLKVSGEEKSALEKAQSALAELGIDFQSDAQHVTIRAVPLPLRQQNLQILIPELIGYLAKQSVFEPGNIAQWIARNLMSEHAQWSMAQAITLLADVERLCPQLVKTPPGGLLQSVDLHPAIKALKDE.

Positions 362–397 (HFAEPAVREPVAPRYSPAPASGSRPAAPWPNAQPGY) are disordered. The span at 373–387 (APRYSPAPASGSRPA) shows a compositional bias: low complexity.

This sequence belongs to the DNA mismatch repair MutL/HexB family.

Its function is as follows. This protein is involved in the repair of mismatches in DNA. It is required for dam-dependent methyl-directed DNA mismatch repair. May act as a 'molecular matchmaker', a protein that promotes the formation of a stable complex between two or more DNA-binding proteins in an ATP-dependent manner without itself being part of a final effector complex. The chain is DNA mismatch repair protein MutL from Escherichia coli O81 (strain ED1a).